The sequence spans 94 residues: Co-chaperonin GroES (94 aa).

Belongs to the GroES chaperonin family. As to quaternary structure, heptamer of 7 subunits arranged in a ring. Interacts with the chaperonin GroEL.

It localises to the cytoplasm. Together with the chaperonin GroEL, plays an essential role in assisting protein folding. The GroEL-GroES system forms a nano-cage that allows encapsulation of the non-native substrate proteins and provides a physical environment optimized to promote and accelerate protein folding. GroES binds to the apical surface of the GroEL ring, thereby capping the opening of the GroEL channel. This Clostridium botulinum protein is Co-chaperonin GroES.